Reading from the N-terminus, the 186-residue chain is uncharacterized protein (186 aa).

This is an uncharacterized protein from Trypanosoma brucei brucei.